Consider the following 188-residue polypeptide: Phosphoribosylglycinamide formyltransferase (188 aa).

12–14 (GSN) lines the N(1)-(5-phospho-beta-D-ribosyl)glycinamide pocket. (6R)-10-formyltetrahydrofolate-binding positions include Lys-66, 91–94 (MRLI), and Asn-108. His-110 serves as the catalytic Proton donor.

Belongs to the GART family.

It catalyses the reaction N(1)-(5-phospho-beta-D-ribosyl)glycinamide + (6R)-10-formyltetrahydrofolate = N(2)-formyl-N(1)-(5-phospho-beta-D-ribosyl)glycinamide + (6S)-5,6,7,8-tetrahydrofolate + H(+). It functions in the pathway purine metabolism; IMP biosynthesis via de novo pathway; N(2)-formyl-N(1)-(5-phospho-D-ribosyl)glycinamide from N(1)-(5-phospho-D-ribosyl)glycinamide (10-formyl THF route): step 1/1. Functionally, catalyzes the transfer of a formyl group from 10-formyltetrahydrofolate to 5-phospho-ribosyl-glycinamide (GAR), producing 5-phospho-ribosyl-N-formylglycinamide (FGAR) and tetrahydrofolate. The chain is Phosphoribosylglycinamide formyltransferase from Staphylococcus aureus (strain MRSA252).